The sequence spans 88 residues: Phosphocarrier protein HPr (88 aa).

The HPr domain occupies 1–88 (MEKREFNIIA…DTMKKEGLAE (88 aa)). Catalysis depends on histidine 15, which acts as the Pros-phosphohistidine intermediate. Serine 46 bears the Phosphoserine; by HPrK/P mark.

It belongs to the HPr family.

Its subcellular location is the cytoplasm. With respect to regulation, phosphorylation on Ser-46 inhibits the phosphoryl transfer from enzyme I to HPr. Its function is as follows. General (non sugar-specific) component of the phosphoenolpyruvate-dependent sugar phosphotransferase system (sugar PTS). This major carbohydrate active-transport system catalyzes the phosphorylation of incoming sugar substrates concomitantly with their translocation across the cell membrane. The phosphoryl group from phosphoenolpyruvate (PEP) is transferred to the phosphoryl carrier protein HPr by enzyme I. Phospho-HPr then transfers it to the PTS EIIA domain. P-Ser-HPr interacts with the catabolite control protein A (CcpA), forming a complex that binds to DNA at the catabolite response elements cre, operator sites preceding a large number of catabolite-regulated genes. Thus, P-Ser-HPr is a corepressor in carbon catabolite repression (CCR), a mechanism that allows bacteria to coordinate and optimize the utilization of available carbon sources. P-Ser-HPr also plays a role in inducer exclusion, in which it probably interacts with several non-PTS permeases and inhibits their transport activity. This Lacticaseibacillus casei (Lactobacillus casei) protein is Phosphocarrier protein HPr (ptsH).